A 275-amino-acid polypeptide reads, in one-letter code: NH(3)-dependent NAD(+) synthetase (275 aa).

ATP is bound at residue 46 to 53 (GISGGQDS). Asp52 provides a ligand contact to Mg(2+). Deamido-NAD(+) is bound at residue Arg140. Residue Thr160 coordinates ATP. Glu165 provides a ligand contact to Mg(2+). Deamido-NAD(+) contacts are provided by Lys173 and Asp180. ATP contacts are provided by Lys189 and Thr211. 260 to 261 (HK) lines the deamido-NAD(+) pocket.

The protein belongs to the NAD synthetase family. In terms of assembly, homodimer.

It carries out the reaction deamido-NAD(+) + NH4(+) + ATP = AMP + diphosphate + NAD(+) + H(+). It participates in cofactor biosynthesis; NAD(+) biosynthesis; NAD(+) from deamido-NAD(+) (ammonia route): step 1/1. Functionally, catalyzes the ATP-dependent amidation of deamido-NAD to form NAD. Uses ammonia as a nitrogen source. The polypeptide is NH(3)-dependent NAD(+) synthetase (Salmonella paratyphi A (strain ATCC 9150 / SARB42)).